Consider the following 223-residue polypeptide: Deoxyribose-phosphate aldolase (223 aa).

The Proton donor/acceptor role is filled by Asp92. The Schiff-base intermediate with acetaldehyde role is filled by Lys154. The Proton donor/acceptor role is filled by Lys182.

This sequence belongs to the DeoC/FbaB aldolase family. DeoC type 1 subfamily.

It localises to the cytoplasm. It carries out the reaction 2-deoxy-D-ribose 5-phosphate = D-glyceraldehyde 3-phosphate + acetaldehyde. It participates in carbohydrate degradation; 2-deoxy-D-ribose 1-phosphate degradation; D-glyceraldehyde 3-phosphate and acetaldehyde from 2-deoxy-alpha-D-ribose 1-phosphate: step 2/2. In terms of biological role, catalyzes a reversible aldol reaction between acetaldehyde and D-glyceraldehyde 3-phosphate to generate 2-deoxy-D-ribose 5-phosphate. The polypeptide is Deoxyribose-phosphate aldolase (Haemophilus influenzae (strain PittEE)).